A 234-amino-acid chain; its full sequence is Interleukin-34 (234 aa).

A signal peptide spans Met-1–Gly-20. Asn-99 is a glycosylation site (N-linked (GlcNAc...) asparagine). Positions Pro-215–Pro-234 are disordered. Polar residues predominate over residues Leu-222 to Pro-234.

The protein belongs to the IL-34 family. In terms of assembly, homodimer. Interacts with CSF1R.

The protein resides in the secreted. In terms of biological role, cytokine that promotes the proliferation, survival and differentiation of monocytes and macrophages. Promotes the release of pro-inflammatory chemokines, and thereby plays an important role in innate immunity and in inflammatory processes. Plays an important role in the regulation of osteoclast proliferation and differentiation, and in the regulation of bone resorption. Signaling via CSF1R and its downstream effectors stimulates phosphorylation of MAPK1/ERK2 AND MAPK3/ERK1. This is Interleukin-34 (Il34) from Rattus norvegicus (Rat).